The chain runs to 512 residues: Cytochrome P450 1A1 (512 aa).

Positions 29 to 40 are mitochondrial targeting signal; that stretch reads SRPQVPKGLKNP. O-linked (GlcNAc) serine glycosylation occurs at Ser67. Phe224 provides a ligand contact to substrate. Cys457 is a binding site for heme.

The protein belongs to the cytochrome P450 family. Interacts with cytosolic chaperones HSP70 and HSP90; this interaction is required for initial targeting to mitochondria. Interacts (via mitochondrial targeting signal) with TOMM40 (via N-terminus); this interaction is required for translocation across the mitochondrial outer membrane. Heme serves as cofactor. Lung, lymphocytes and placenta.

It localises to the endoplasmic reticulum membrane. The protein localises to the mitochondrion inner membrane. The protein resides in the microsome membrane. Its subcellular location is the cytoplasm. The catalysed reaction is an organic molecule + reduced [NADPH--hemoprotein reductase] + O2 = an alcohol + oxidized [NADPH--hemoprotein reductase] + H2O + H(+). The enzyme catalyses estrone + reduced [NADPH--hemoprotein reductase] + O2 = 2-hydroxyestrone + oxidized [NADPH--hemoprotein reductase] + H2O + H(+). It carries out the reaction estrone + reduced [NADPH--hemoprotein reductase] + O2 = 4-hydroxyestrone + oxidized [NADPH--hemoprotein reductase] + H2O + H(+). It catalyses the reaction estrone + reduced [NADPH--hemoprotein reductase] + O2 = 6alpha-hydroxyestrone + oxidized [NADPH--hemoprotein reductase] + H2O + H(+). The catalysed reaction is estrone + reduced [NADPH--hemoprotein reductase] + O2 = 15alpha-hydroxyestrone + oxidized [NADPH--hemoprotein reductase] + H2O + H(+). The enzyme catalyses estrone + reduced [NADPH--hemoprotein reductase] + O2 = 16alpha-hydroxyestrone + oxidized [NADPH--hemoprotein reductase] + H2O + H(+). It carries out the reaction 17beta-estradiol + reduced [NADPH--hemoprotein reductase] + O2 = 2-hydroxy-17beta-estradiol + oxidized [NADPH--hemoprotein reductase] + H2O + H(+). It catalyses the reaction 17beta-estradiol + reduced [NADPH--hemoprotein reductase] + O2 = 4-hydroxy-17beta-estradiol + oxidized [NADPH--hemoprotein reductase] + H2O + H(+). The catalysed reaction is 17beta-estradiol + reduced [NADPH--hemoprotein reductase] + O2 = 6alpha-hydroxy-17beta-estradiol + oxidized [NADPH--hemoprotein reductase] + H2O + H(+). The enzyme catalyses 17beta-estradiol + reduced [NADPH--hemoprotein reductase] + O2 = 7alpha-hydroxy-17beta-estradiol + oxidized [NADPH--hemoprotein reductase] + H2O + H(+). It carries out the reaction 17beta-estradiol + reduced [NADPH--hemoprotein reductase] + O2 = 15alpha-hydroxy-17beta-estradiol + oxidized [NADPH--hemoprotein reductase] + H2O + H(+). It catalyses the reaction (5Z,8Z,11Z)-eicosatrienoate + reduced [NADPH--hemoprotein reductase] + O2 = 19-hydroxy-(5Z,8Z,11Z)-eicosatrienoate + oxidized [NADPH--hemoprotein reductase] + H2O + H(+). The catalysed reaction is (5Z,8Z,11Z,14Z)-eicosatetraenoate + reduced [NADPH--hemoprotein reductase] + O2 = 16-hydroxy-(5Z,8Z,11Z,14Z)-eicosatetraenoate + oxidized [NADPH--hemoprotein reductase] + H2O + H(+). The enzyme catalyses (5Z,8Z,11Z,14Z)-eicosatetraenoate + reduced [NADPH--hemoprotein reductase] + O2 = 17-hydroxy-(5Z,8Z,11Z,14Z)-eicosatetraenoate + oxidized [NADPH--hemoprotein reductase] + H2O + H(+). It carries out the reaction (5Z,8Z,11Z,14Z)-eicosatetraenoate + reduced [NADPH--hemoprotein reductase] + O2 = 18-hydroxy-(5Z,8Z,11Z,14Z)-eicosatetraenoate + oxidized [NADPH--hemoprotein reductase] + H2O + H(+). It catalyses the reaction (5Z,8Z,11Z,14Z)-eicosatetraenoate + reduced [NADPH--hemoprotein reductase] + O2 = 19-hydroxy-(5Z,8Z,11Z,14Z)-eicosatetraenoate + oxidized [NADPH--hemoprotein reductase] + H2O + H(+). The catalysed reaction is (5Z,8Z,11Z,14Z,17Z)-eicosapentaenoate + reduced [NADPH--hemoprotein reductase] + O2 = 19-hydroxy-(5Z,8Z,11Z,14Z,17Z)-eicosapentaenoate + oxidized [NADPH--hemoprotein reductase] + H2O + H(+). The enzyme catalyses (5Z,8Z,11Z,14Z)-eicosatetraenoate + reduced [NADPH--hemoprotein reductase] + O2 = (8R,9S)-epoxy-(5Z,11Z,14Z)-eicosatrienoate + oxidized [NADPH--hemoprotein reductase] + H2O + H(+). It carries out the reaction (5Z,8Z,11Z,14Z)-eicosatetraenoate + reduced [NADPH--hemoprotein reductase] + O2 = (11R,12S)-epoxy-(5Z,8Z,14Z)-eicosatrienoate + oxidized [NADPH--hemoprotein reductase] + H2O + H(+). It catalyses the reaction (5Z,8Z,11Z,14Z)-eicosatetraenoate + reduced [NADPH--hemoprotein reductase] + O2 = (14S,15R)-epoxy-(5Z,8Z,11Z)-eicosatrienoate + oxidized [NADPH--hemoprotein reductase] + H2O + H(+). The catalysed reaction is (5Z,8Z,11Z,14Z)-eicosatetraenoate + reduced [NADPH--hemoprotein reductase] + O2 = (14R,15S)-epoxy-(5Z,8Z,11Z)-eicosatrienoate + oxidized [NADPH--hemoprotein reductase] + H2O + H(+). The enzyme catalyses (5Z,8Z,11Z,14Z,17Z)-eicosapentaenoate + reduced [NADPH--hemoprotein reductase] + O2 = (17R,18S)-epoxy-(5Z,8Z,11Z,14Z)-eicosatetraenoate + oxidized [NADPH--hemoprotein reductase] + H2O + H(+). It carries out the reaction (4Z,7Z,10Z,13Z,16Z,19Z)-docosahexaenoate + reduced [NADPH--hemoprotein reductase] + O2 = (19S,20R)-epoxy-(4Z,7Z,10Z,13Z,16Z)-docosapentaenoate + oxidized [NADPH--hemoprotein reductase] + H2O + H(+). It catalyses the reaction (4Z,7Z,10Z,13Z,16Z,19Z)-docosahexaenoate + reduced [NADPH--hemoprotein reductase] + O2 = (19R,20S)-epoxy-(4Z,7Z,10Z,13Z,16Z)-docosapentaenoate + oxidized [NADPH--hemoprotein reductase] + H2O + H(+). The catalysed reaction is all-trans-retinol + reduced [NADPH--hemoprotein reductase] + O2 = all-trans-retinal + oxidized [NADPH--hemoprotein reductase] + 2 H2O + H(+). The enzyme catalyses all-trans-retinal + reduced [NADPH--hemoprotein reductase] + O2 = all-trans-retinoate + oxidized [NADPH--hemoprotein reductase] + H2O + 2 H(+). It carries out the reaction (13S)-hydroperoxy-(9Z,11E)-octadecadienoate = 13-oxo-(9Z,11E)-octadecadienoate + H2O. It catalyses the reaction (12S)-hydroperoxy-(5Z,8Z,10E,14Z)-eicosatetraenoate = 12-oxo-(5Z,8Z,10E,14Z)-eicosatetraenoate + H2O. The catalysed reaction is (15S)-hydroperoxy-(5Z,8Z,11Z,13E)-eicosatetraenoate = 15-oxo-(5Z,8Z,11Z,13E)-eicosatetraenoate + H2O. The enzyme catalyses (5S)-hydroperoxy-(6E,8Z,11Z,14Z)-eicosatetraenoate = 5-oxo-(6E,8Z,11Z,14Z)-eicosatetraenoate + H2O. It participates in steroid hormone biosynthesis. It functions in the pathway lipid metabolism; fatty acid metabolism. Its pathway is cofactor metabolism; retinol metabolism. A cytochrome P450 monooxygenase involved in the metabolism of various endogenous substrates, including fatty acids, steroid hormones and vitamins. Mechanistically, uses molecular oxygen inserting one oxygen atom into a substrate, and reducing the second into a water molecule, with two electrons provided by NADPH via cytochrome P450 reductase (NADPH--hemoprotein reductase). Catalyzes the hydroxylation of carbon-hydrogen bonds. Exhibits high catalytic activity for the formation of hydroxyestrogens from estrone (E1) and 17beta-estradiol (E2), namely 2-hydroxy E1 and E2, as well as D-ring hydroxylated E1 and E2 at the C15-alpha and C16-alpha positions. Displays different regioselectivities for polyunsaturated fatty acids (PUFA) hydroxylation. Catalyzes the epoxidation of double bonds of certain PUFA. Converts arachidonic acid toward epoxyeicosatrienoic acid (EET) regioisomers, 8,9-, 11,12-, and 14,15-EET, that function as lipid mediators in the vascular system. Displays an absolute stereoselectivity in the epoxidation of eicosapentaenoic acid (EPA) producing the 17(R),18(S) enantiomer. May play an important role in all-trans retinoic acid biosynthesis in extrahepatic tissues. Catalyzes two successive oxidative transformation of all-trans retinol to all-trans retinal and then to the active form all-trans retinoic acid. May also participate in eicosanoids metabolism by converting hydroperoxide species into oxo metabolites (lipoxygenase-like reaction, NADPH-independent). The sequence is that of Cytochrome P450 1A1 from Homo sapiens (Human).